A 476-amino-acid polypeptide reads, in one-letter code: Sulfate adenylyltransferase subunit 1 (476 aa).

Positions 17–232 constitute a tr-type G domain; the sequence is KDLLRLLTAG…LETVHIDSDN (216 aa). A G1 region spans residues 26–33; that stretch reads GSVDDGKS. Residue 26–33 coordinates GTP; that stretch reads GSVDDGKS. The G2 stretch occupies residues 84–88; sequence GITID. The interval 105–108 is G3; that stretch reads DTPG. GTP-binding positions include 105–109 and 160–163; these read DTPGH and NKMD. The tract at residues 160–163 is G4; it reads NKMD. Positions 197–199 are G5; that stretch reads SAL.

Belongs to the TRAFAC class translation factor GTPase superfamily. Classic translation factor GTPase family. CysN/NodQ subfamily. In terms of assembly, heterodimer composed of CysD, the smaller subunit, and CysN.

It carries out the reaction sulfate + ATP + H(+) = adenosine 5'-phosphosulfate + diphosphate. It functions in the pathway sulfur metabolism; hydrogen sulfide biosynthesis; sulfite from sulfate: step 1/3. Functionally, with CysD forms the ATP sulfurylase (ATPS) that catalyzes the adenylation of sulfate producing adenosine 5'-phosphosulfate (APS) and diphosphate, the first enzymatic step in sulfur assimilation pathway. APS synthesis involves the formation of a high-energy phosphoric-sulfuric acid anhydride bond driven by GTP hydrolysis by CysN coupled to ATP hydrolysis by CysD. This is Sulfate adenylyltransferase subunit 1 from Bacteroides fragilis (strain YCH46).